The following is a 417-amino-acid chain: UPF0597 protein Cphy_1256 (417 aa).

This sequence belongs to the UPF0597 family.

This is UPF0597 protein Cphy_1256 from Lachnoclostridium phytofermentans (strain ATCC 700394 / DSM 18823 / ISDg) (Clostridium phytofermentans).